The sequence spans 170 residues: Cathelicidin antimicrobial peptide (170 aa).

An N-terminal signal peptide occupies residues 1 to 30; the sequence is MKTQRDSPSLGRWSLVLLLLGLVMPLAIVA. Positions 31–131 are cleaved as a propeptide — cathelin-like domain (CLD); the sequence is QVLSYQEAVL…DISCDKDNRR (101 aa). Cystine bridges form between Cys-86/Cys-97 and Cys-108/Cys-125. An active core region spans residues 150-162; sequence FKRIVQRIKDFLQ.

It belongs to the cathelicidin family. In terms of assembly, monomer, homodimer or homotrimer (in vitro). Oligomerizes as tetra- or hexamer in solution (in vitro). Proteolytically cleaved by proteinase PRTN3 into antibacterial peptide LL-37. Proteolytically cleaved by cathepsin CTSG and neutrophil elastase ELANE. Post-translationally, resistant to proteolytic degradation in solution, and when bound to both zwitterionic (mimicking mammalian membranes) and negatively charged membranes (mimicking bacterial membranes). In terms of processing, after secretion onto the skin surface, the CAMP gene product is processed by a serine protease-dependent mechanism into multiple novel antimicrobial peptides distinct from and shorter than cathelicidin LL-37. These peptides show enhanced antimicrobial action, acquiring the ability to kill skin pathogens such as S.aureus, E.coli and C.albicans. These peptides have lost the ability to stimulate CXCL8/IL8 release from keratinocytes. The peptides act synergistically, killing bacteria at lower concentrations when present together, and maintain activity at increased salt condition.

It localises to the secreted. It is found in the vesicle. Its function is as follows. Antimicrobial protein that is an integral component of the innate immune system. Binds to bacterial lipopolysaccharides (LPS). Acts via neutrophil N-formyl peptide receptors to enhance the release of CXCL2. Postsecretory processing generates multiple cathelicidin antimicrobial peptides with various lengths which act as a topical antimicrobial defense in sweat on skin. The unprocessed precursor form, cathelicidin antimicrobial peptide, inhibits the growth of Gram-negative E.coli and E.aerogenes with efficiencies comparable to that of the mature peptide LL-37 (in vitro). Functionally, antimicrobial peptide that is an integral component of the innate immune system. Binds to bacterial lipopolysaccharides (LPS). Causes membrane permeabilization by forming transmembrane pores (in vitro). Causes lysis of E.coli. Exhibits antimicrobial activity against Gram-negative bacteria such as P.aeruginosa, S.typhimurium, E.aerogenes, E.coli and P.syringae, Gram-positive bacteria such as L.monocytogenes, S.epidermidis, S.pyogenes and S.aureus, as well as vancomycin-resistant enterococci (in vitro). Exhibits antimicrobial activity against methicillin-resistant S.aureus, P.mirabilis, and C.albicans in low-salt media, but not in media containing 100 mM NaCl (in vitro). Forms chiral supramolecular assemblies with quinolone signal (PQS) molecules of P.aeruginosa, which may lead to interference of bacterial quorum signaling and perturbance of bacterial biofilm formation. May form supramolecular fiber-like assemblies on bacterial membranes. Induces cytokine and chemokine producation as well as TNF/TNFA and CSF2/GMCSF production in normal human keratinocytes. Exhibits hemolytic activity against red blood cells. In terms of biological role, exhibits antimicrobial activity against E.coli and B.megaterium (in vitro). The chain is Cathelicidin antimicrobial peptide from Nomascus gabriellae (Red-cheeked gibbon).